The sequence spans 57 residues: UPF0391 membrane protein azo1765 (57 aa).

The next 2 helical transmembrane spans lie at 1–21 and 33–53; these read MIKW…FGFT and VLFF…VGLG.

It belongs to the UPF0391 family.

The protein localises to the cell membrane. This chain is UPF0391 membrane protein azo1765, found in Azoarcus sp. (strain BH72).